A 359-amino-acid polypeptide reads, in one-letter code: Peroxisome assembly protein 12 (359 aa).

At 1-19 the chain is on the peroxisomal matrix side; it reads MAEHGAHITTASVVDDQPS. The helical transmembrane segment at 20–47 threads the bilayer; it reads IFEVVAQDSLMSAVRPALQHVVKVLAES. Residues 48–51 lie on the Cytoplasmic side of the membrane; sequence NPAH. The helical transmembrane segment at 52–76 threads the bilayer; the sequence is FGFFWRWFDEIFTLLDLLLQQHYLS. The Peroxisomal matrix segment spans residues 77–109; sequence KTSASFSENFYGLKRIVMGDQHKLQRLANAGLP. Residues 110–139 traverse the membrane as a helical segment; sequence KQQFMKSIMFLVLLPYLKVKLEKLVSSLRE. The Cytoplasmic portion of the chain corresponds to 140–144; that stretch reads EDEYS. A helical transmembrane segment spans residues 145–183; that stretch reads IHPPSSRWKRFYRAFLAAYPFVNMAWEGWFLVQQLRYIL. Topologically, residues 184-249 are peroxisomal matrix; the sequence is GKAQHHSPLL…VGGVALSLST (66 aa). A helical membrane pass occupies residues 250–277; sequence GLSVGVFFLQFLEWWYSSENQETIKSLT. At 278-359 the chain is on the cytoplasmic side; sequence ALPTPPPPVH…HLIKLYSPEN (82 aa). Zn(2+) contacts are provided by cysteine 304, cysteine 307, cysteine 325, and cysteine 328. An RING-type; degenerate zinc finger spans residues 304–343; it reads CPLCRKNRVNDTVLATSGYVFCYRCVFHYVRSHQACPITG.

Belongs to the pex2/pex10/pex12 family. In terms of assembly, component of the PEX2-PEX10-PEX12 retrotranslocation channel, composed of PEX2, PEX10 and PEX12. Interacts with PEX19 via its cytoplasmic domain.

The protein resides in the peroxisome membrane. It participates in protein modification; protein ubiquitination. Functionally, component of a retrotranslocation channel required for peroxisome organization by mediating export of the PEX5 receptor from peroxisomes to the cytosol, thereby promoting PEX5 recycling. The retrotranslocation channel is composed of PEX2, PEX10 and PEX12; each subunit contributing transmembrane segments that coassemble into an open channel that specifically allows the passage of PEX5 through the peroxisomal membrane. PEX12 also regulates PEX5 recycling by activating the E3 ubiquitin-protein ligase activity of PEX10. When PEX5 recycling is compromised, PEX12 stimulates PEX10-mediated polyubiquitination of PEX5, leading to its subsequent degradation. The sequence is that of Peroxisome assembly protein 12 (PEX12) from Bos taurus (Bovine).